The sequence spans 237 residues: E3 ubiquitin-protein ligase RNF166 (237 aa).

An RING-type zinc finger spans residues 33 to 73 (CPICLEVYHRPVAIGSCGHTFCGECLQPCLQVPSPLCPLCR). Zn(2+) contacts are provided by Cys-98, Cys-101, His-113, and Cys-117. The segment at 98–117 (CRGCNKKVTLAKMRVHISSC) adopts a C2HC RNF-type zinc-finger fold. The region spanning 221–237 (DEEAAFQAALALSLSEN) is the UIM domain.

It is found in the cytoplasm. It catalyses the reaction S-ubiquitinyl-[E2 ubiquitin-conjugating enzyme]-L-cysteine + [acceptor protein]-L-lysine = [E2 ubiquitin-conjugating enzyme]-L-cysteine + N(6)-ubiquitinyl-[acceptor protein]-L-lysine.. It functions in the pathway protein modification; protein ubiquitination. In terms of biological role, E3 ubiquitin-protein ligase that promotes the ubiquitination of different substrates. In turn, participates in different biological processes including interferon production or autophagy. Plays a role in the activation of RNA virus-induced interferon-beta production by promoting the ubiquitination of TRAF3 and TRAF6. Also plays a role in the early recruitment of autophagy adapters to bacteria. Mediates 'Lys-29' and 'Lys-33'-linked ubiquitination of SQSTM1 leading to xenophagic targeting of bacteria and inhibition of their replication. This chain is E3 ubiquitin-protein ligase RNF166 (RNF166), found in Homo sapiens (Human).